The chain runs to 308 residues: Isoflavone reductase homolog (308 aa).

NADP(+) is bound by residues 11-17 (GGTGYIG), arginine 36, and lysine 45. The Proton acceptor role is filled by lysine 133. Arginine 137 lines the NADP(+) pocket.

This sequence belongs to the NmrA-type oxidoreductase family. Isoflavone reductase subfamily.

The protein resides in the cytoplasm. In Solanum tuberosum (Potato), this protein is Isoflavone reductase homolog.